The following is a 511-amino-acid chain: V-type proton ATPase subunit B, brain isoform (511 aa).

An ATP-binding site is contributed by R400.

This sequence belongs to the ATPase alpha/beta chains family. In terms of assembly, V-ATPase is a heteromultimeric enzyme made up of two complexes: the ATP-hydrolytic V1 complex and the proton translocation V0 complex. The V1 complex consists of three catalytic AB heterodimers that form a heterohexamer, three peripheral stalks each consisting of EG heterodimers, one central rotor including subunits D and F, and the regulatory subunits C and H. The proton translocation complex V0 consists of the proton transport subunit a, a ring of proteolipid subunits c9c'', rotary subunit d, subunits e and f, and the accessory subunits ATP6AP1/Ac45 and ATP6AP2/PRR. In terms of tissue distribution, kidney; localizes to early distal nephron, encompassing thick ascending limbs and distal convoluted tubules (at protein level).

It localises to the apical cell membrane. It is found in the melanosome. The protein localises to the cytoplasm. Its subcellular location is the cytoplasmic vesicle. The protein resides in the secretory vesicle. It localises to the synaptic vesicle membrane. It is found in the clathrin-coated vesicle membrane. Functionally, non-catalytic subunit of the V1 complex of vacuolar(H+)-ATPase (V-ATPase), a multisubunit enzyme composed of a peripheral complex (V1) that hydrolyzes ATP and a membrane integral complex (V0) that translocates protons. V-ATPase is responsible for acidifying and maintaining the pH of intracellular compartments and in some cell types, is targeted to the plasma membrane, where it is responsible for acidifying the extracellular environment. In renal intercalated cells, can partially compensate the lack of ATP6V1B1 and mediate secretion of protons (H+) into the urine under base-line conditions but not in conditions of acid load. This is V-type proton ATPase subunit B, brain isoform (ATP6V1B2) from Homo sapiens (Human).